A 218-amino-acid polypeptide reads, in one-letter code: Ribose-5-phosphate isomerase A (218 aa).

Substrate contacts are provided by residues 27-30 (TGST), 80-83 (DGAD), and 93-96 (KGGG). The active-site Proton acceptor is E102. K120 serves as a coordination point for substrate.

This sequence belongs to the ribose 5-phosphate isomerase family. Homodimer.

It catalyses the reaction aldehydo-D-ribose 5-phosphate = D-ribulose 5-phosphate. The protein operates within carbohydrate degradation; pentose phosphate pathway; D-ribose 5-phosphate from D-ribulose 5-phosphate (non-oxidative stage): step 1/1. Its function is as follows. Catalyzes the reversible conversion of ribose-5-phosphate to ribulose 5-phosphate. This Thiobacillus denitrificans (strain ATCC 25259 / T1) protein is Ribose-5-phosphate isomerase A.